We begin with the raw amino-acid sequence, 447 residues long: Vasoactive intestinal polypeptide receptor (447 aa).

The Extracellular segment spans residues 1–103 (MCDVVNEIEL…VDDDSFFRSV (103 aa)). Intrachain disulfides connect C15–C36, C27–C69, and C50–C86. Residues N17, N22, N64, and N91 are each glycosylated (N-linked (GlcNAc...) asparagine). The chain crosses the membrane as a helical span at residues 104–128 (KIGYTIGHSVSLISLTTAIVILCMS). Topologically, residues 129 to 135 (RKLHCTR) are cytoplasmic. The chain crosses the membrane as a helical span at residues 136 to 155 (NYIHMHLFVSFILKAIAVFV). Residues 156 to 178 (KDAVLYDVIQESDNCSTASVGCK) lie on the Extracellular side of the membrane. A glycan (N-linked (GlcNAc...) asparagine) is linked at N169. C177 and C247 form a disulfide bridge. Residues 179 to 202 (AVIVFFQYCIMASFFWLLVEGLYL) traverse the membrane as a helical segment. Topologically, residues 203–216 (HALLAVSFFSERKY) are cytoplasmic. A helical membrane pass occupies residues 217 to 238 (FWWYILIGWGGPTIFIMAWSFA). Over 239 to 256 (KAYFNDVGCWDIIENSDL) the chain is Extracellular. Residues 257–280 (FWWIIKTPILASILMNFILFICII) traverse the membrane as a helical segment. Residues 281–305 (RILRQKINCPDIGRNESNQYSRLAK) lie on the Cytoplasmic side of the membrane. A helical membrane pass occupies residues 306–325 (STLLLIPLFGINFIIFAFIP). Topologically, residues 326–337 (ENIKTELRLVFD) are extracellular. The chain crosses the membrane as a helical span at residues 338–357 (LILGSFQGFVVAVLYCFLNG). Residues 358–447 (EVQAEIKRKW…KGHEDVREVS (90 aa)) are Cytoplasmic-facing.

It belongs to the G-protein coupled receptor 2 family.

The protein resides in the cell membrane. In terms of biological role, this is a receptor for VIP. The activity of this receptor is mediated by G proteins which activate adenylyl cyclase. The sequence is that of Vasoactive intestinal polypeptide receptor (vipr1) from Carassius auratus (Goldfish).